The chain runs to 104 residues: uncharacterized protein (104 aa).

Homodimer.

This is an uncharacterized protein from Bacillus subtilis (strain 168).